The sequence spans 80 residues: Exodeoxyribonuclease 7 small subunit (80 aa).

The protein belongs to the XseB family. As to quaternary structure, heterooligomer composed of large and small subunits.

Its subcellular location is the cytoplasm. It catalyses the reaction Exonucleolytic cleavage in either 5'- to 3'- or 3'- to 5'-direction to yield nucleoside 5'-phosphates.. Its function is as follows. Bidirectionally degrades single-stranded DNA into large acid-insoluble oligonucleotides, which are then degraded further into small acid-soluble oligonucleotides. This Pseudoalteromonas translucida (strain TAC 125) protein is Exodeoxyribonuclease 7 small subunit.